A 101-amino-acid polypeptide reads, in one-letter code: NAD(P)H-quinone oxidoreductase subunit 4L, chloroplastic (101 aa).

Transmembrane regions (helical) follow at residues 2–22 (MLEHILVLSAYLFSIGIYGLI), 32–52 (MCLELILNAVNINFVTFSDFF), and 61–81 (IFSIFVIAIAAAEAAIGSAIV).

This sequence belongs to the complex I subunit 4L family. NDH is composed of at least 16 different subunits, 5 of which are encoded in the nucleus.

The protein localises to the plastid. It localises to the chloroplast thylakoid membrane. The catalysed reaction is a plastoquinone + NADH + (n+1) H(+)(in) = a plastoquinol + NAD(+) + n H(+)(out). It catalyses the reaction a plastoquinone + NADPH + (n+1) H(+)(in) = a plastoquinol + NADP(+) + n H(+)(out). Functionally, NDH shuttles electrons from NAD(P)H:plastoquinone, via FMN and iron-sulfur (Fe-S) centers, to quinones in the photosynthetic chain and possibly in a chloroplast respiratory chain. The immediate electron acceptor for the enzyme in this species is believed to be plastoquinone. Couples the redox reaction to proton translocation, and thus conserves the redox energy in a proton gradient. This chain is NAD(P)H-quinone oxidoreductase subunit 4L, chloroplastic, found in Gossypium hirsutum (Upland cotton).